A 207-amino-acid chain; its full sequence is Large ribosomal subunit protein uL4 (207 aa).

A disordered region spans residues 49–73 (AKKRGEVSGGGKKPWKQKGGGRARA).

Belongs to the universal ribosomal protein uL4 family. Part of the 50S ribosomal subunit.

Its function is as follows. One of the primary rRNA binding proteins, this protein initially binds near the 5'-end of the 23S rRNA. It is important during the early stages of 50S assembly. It makes multiple contacts with different domains of the 23S rRNA in the assembled 50S subunit and ribosome. Forms part of the polypeptide exit tunnel. The chain is Large ribosomal subunit protein uL4 from Helicobacter hepaticus (strain ATCC 51449 / 3B1).